The chain runs to 411 residues: Squalene synthase (411 aa).

The NADP(+) site is built by Arg-49 and Arg-74. Positions 77, 80, and 81 each coordinate Mg(2+). The NADP(+) site is built by Arg-212, Lys-312, and Arg-314. Residues 388-408 (SPVLIVVIFIILAIILAQLFG) traverse the membrane as a helical segment.

This sequence belongs to the phytoene/squalene synthase family. Mg(2+) is required as a cofactor.

The protein localises to the membrane. It catalyses the reaction 2 (2E,6E)-farnesyl diphosphate + NADH + H(+) = squalene + 2 diphosphate + NAD(+). The enzyme catalyses 2 (2E,6E)-farnesyl diphosphate + NADPH + H(+) = squalene + 2 diphosphate + NADP(+). In terms of biological role, converts farnesyl diphosphate (FPP) into squalene, a precursor for sterol biosynthesis in eukaryotes. This chain is Squalene synthase, found in Solanum lycopersicum (Tomato).